A 215-amino-acid polypeptide reads, in one-letter code: Pyrrolidone-carboxylate peptidase (215 aa).

Active-site residues include Glu78, Cys141, and His165.

This sequence belongs to the peptidase C15 family. As to quaternary structure, homotetramer.

The protein localises to the cytoplasm. It carries out the reaction Release of an N-terminal pyroglutamyl group from a polypeptide, the second amino acid generally not being Pro.. In terms of biological role, removes 5-oxoproline from various penultimate amino acid residues except L-proline. This chain is Pyrrolidone-carboxylate peptidase, found in Streptococcus pyogenes serotype M18 (strain MGAS8232).